The sequence spans 87 residues: Large ribosomal subunit protein bL27 (87 aa).

Positions 1–25 (MAHKKGASSSRNGRDSNAQRLGVKR) are disordered. Positions 7–19 (ASSSRNGRDSNAQ) are enriched in polar residues.

Belongs to the bacterial ribosomal protein bL27 family.

The sequence is that of Large ribosomal subunit protein bL27 from Rhodococcus jostii (strain RHA1).